Consider the following 233-residue polypeptide: MKFIILTLFPESFDYLKSYGVIGKAIQNNLIELEVVNIRDYTKNKHKKVDDEIYGGGAGMLMTCQPIYDCLEDVNKNQSKVVFMSPQGKVLNQQKCIELSKEKEIVILCGHYEGVDSRIINHYCDEEISIGDYVMTGGELGAMVLIDCVSRMINDVLGNDESYKTDSHYNLLLQEDSYTRPRVFNGYEVPEVLLSGNHEKIEQWREKSRLNNTKLKREDIYQKYLKEKNQGGS.

S-adenosyl-L-methionine-binding positions include glycine 110 and 130-135 (IGDYVM).

This sequence belongs to the RNA methyltransferase TrmD family. In terms of assembly, homodimer.

The protein localises to the cytoplasm. The catalysed reaction is guanosine(37) in tRNA + S-adenosyl-L-methionine = N(1)-methylguanosine(37) in tRNA + S-adenosyl-L-homocysteine + H(+). Functionally, specifically methylates guanosine-37 in various tRNAs. This is tRNA (guanine-N(1)-)-methyltransferase from Finegoldia magna (strain ATCC 29328 / DSM 20472 / WAL 2508) (Peptostreptococcus magnus).